Here is a 206-residue protein sequence, read N- to C-terminus: Adenine phosphoribosyltransferase (206 aa).

It belongs to the purine/pyrimidine phosphoribosyltransferase family. Homodimer.

It is found in the cytoplasm. It carries out the reaction AMP + diphosphate = 5-phospho-alpha-D-ribose 1-diphosphate + adenine. Its pathway is purine metabolism; AMP biosynthesis via salvage pathway; AMP from adenine: step 1/1. In terms of biological role, catalyzes a salvage reaction resulting in the formation of AMP, that is energically less costly than de novo synthesis. The protein is Adenine phosphoribosyltransferase of Rhodopirellula baltica (strain DSM 10527 / NCIMB 13988 / SH1).